The sequence spans 138 residues: Acidic phospholipase A2 RV-7 (138 aa).

Positions 1 to 16 (MRTLWIVAVCLIGVEG) are cleaved as a signal peptide. 7 disulfide bridges follow: Cys42–Cys131, Cys44–Cys60, Cys59–Cys111, Cys65–Cys138, Cys66–Cys104, Cys73–Cys97, and Cys91–Cys102. Ca(2+) is bound by residues Tyr43, Gly45, and Gly47. His63 is a catalytic residue. Asp64 contacts Ca(2+). The active site involves Asp105.

The protein belongs to the phospholipase A2 family. Group II subfamily. D49 sub-subfamily. As to quaternary structure, heterodimer of a weakly toxic basic protein having phospholipase A2 activity (RV-4) and a non-toxic acidic protein which inhibits its enzymatic activity but potentiates its lethal potency and neurotoxicity (RV-7). The cofactor is Ca(2+). In terms of tissue distribution, expressed by the venom gland.

The protein resides in the secreted. The enzyme catalyses a 1,2-diacyl-sn-glycero-3-phosphocholine + H2O = a 1-acyl-sn-glycero-3-phosphocholine + a fatty acid + H(+). Functionally, heterodimer: RV-4/RV-7 targets the presynaptic sites of the neuromuscular junction. Monomer: snake venom phospholipase A2 (PLA2) RV-7 that has low enzymatic activity and is not toxic. It inhibits the enzymatic activity of RV-4 in vitro but potentiates its lethal potency and neurotoxicity. It may facilitate the specific binding of RV-4 to its presynaptic binding sites, probably by acting as a chaperone, minimizing distraction and destruction of RV-4 en route to the site of action by reducing non-specific binding to muscle and other organs. PLA2 catalyzes the calcium-dependent hydrolysis of the 2-acyl groups in 3-sn-phosphoglycerides. The polypeptide is Acidic phospholipase A2 RV-7 (Daboia siamensis (Eastern Russel's viper)).